The following is a 100-amino-acid chain: Internal protein II (100 aa).

A propeptide spanning residues 1-10 (MKTYQEFIAE) is cleaved from the precursor.

Functionally, internal protein II, which has a histone-like character, binds weakly to other components of the assembly core during an early stage of bacteriophage head morphogenesis. The chain is Internal protein II (ipi2) from Enterobacteria phage T4 (Bacteriophage T4).